The primary structure comprises 142 residues: Cell wall-binding protein YqgA (142 aa).

A signal peptide spans 1-28 (MKQGKFSVFLILLLMLTLVVAPKEKAEA).

Found in a complex with F(1)F(0) ATP synthase and SpoIIIJ and YqjG.

It is found in the secreted. The protein localises to the cell wall. The chain is Cell wall-binding protein YqgA (yqgA) from Bacillus subtilis (strain 168).